Here is a 266-residue protein sequence, read N- to C-terminus: Energy-coupling factor transporter transmembrane protein EcfT (266 aa).

7 consecutive transmembrane segments (helical) span residues 26 to 46 (VIAT…RSVT), 47 to 67 (LAGL…HYIL), 69 to 89 (GIKP…LSTP), 116 to 136 (LIWL…IALT), 151 to 171 (LPVH…PTLI), 192 to 212 (SLVA…LSAF), and 246 to 266 (YAVT…KKAL).

It belongs to the energy-coupling factor EcfT family. Forms a stable energy-coupling factor (ECF) transporter complex composed of 2 membrane-embedded substrate-binding proteins (S component), 2 ATP-binding proteins (A component) and 2 transmembrane proteins (T component). May be able to interact with more than 1 S component at a time.

It localises to the cell membrane. Functionally, transmembrane (T) component of an energy-coupling factor (ECF) ABC-transporter complex. Unlike classic ABC transporters this ECF transporter provides the energy necessary to transport a number of different substrates. The protein is Energy-coupling factor transporter transmembrane protein EcfT of Heliobacterium modesticaldum (strain ATCC 51547 / Ice1).